The chain runs to 481 residues: Palmitoyltransferase PFA4 (481 aa).

Residues 1–22 are disordered; it reads MTNQDPDDGAYPSSQSDDDGIE. Residues 1 to 66 are Cytoplasmic-facing; that stretch reads MTNQDPDDGA…APLTGRRRTP (66 aa). The chain crosses the membrane as a helical span at residues 67–87; it reads LSWTEVIWVSLTLLLIAVLGY. Residues 88-108 lie on the Lumenal side of the membrane; that stretch reads SSQLYVMLPYYEKTPSFSPQA. Residues 109–129 form a helical membrane-spanning segment; sequence LAAVLVPFNLGLLAIYYNYWL. Residues 130–223 lie on the Cytoplasmic side of the membrane; it reads CVTTDAGSVP…LANCVGHFNH (94 aa). Residues 181–231 form the DHHC domain; the sequence is RYCKTCSAFKPPRSHHCKTCQRCVLRMDHHCPWLANCVGHFNHAHFIRFLF. Residue cysteine 211 is the S-palmitoyl cysteine intermediate of the active site. Residues 224 to 244 traverse the membrane as a helical segment; it reads AHFIRFLFYVDVTCLYHLIMI. Residues 245-265 are Lumenal-facing; that stretch reads SCRVLDSFNSYTYWREPCARE. A helical transmembrane segment spans residues 266 to 286; the sequence is LVWLVVNYALCIPVILLVGIF. Residues 287–481 lie on the Cytoplasmic side of the membrane; that stretch reads SLYHFYCLAV…EVRPHTPWSV (195 aa). Positions 370-481 are disordered; sequence SQYRWPPKDP…EVRPHTPWSV (112 aa). Over residues 418 to 431 the composition is skewed to low complexity; that stretch reads SSPSSSDSHSSLHL. 2 stretches are compositionally biased toward basic and acidic residues: residues 441 to 452 and 466 to 475; these read LPHHFDPPHDPD and RGSEGYEVRP.

This sequence belongs to the DHHC palmitoyltransferase family. PFA4 subfamily.

The protein localises to the endoplasmic reticulum membrane. The enzyme catalyses L-cysteinyl-[protein] + hexadecanoyl-CoA = S-hexadecanoyl-L-cysteinyl-[protein] + CoA. In terms of biological role, mediates the reversible addition of palmitate to target proteins, thereby regulating their membrane association and biological function. The polypeptide is Palmitoyltransferase PFA4 (Mycosarcoma maydis (Corn smut fungus)).